The following is a 218-amino-acid chain: Pyridoxine/pyridoxamine 5'-phosphate oxidase (218 aa).

Substrate contacts are provided by residues 14-17 and lysine 72; that span reads RREY. FMN-binding positions include 67 to 72, 82 to 83, arginine 88, lysine 89, and glutamine 111; these read RIVLLK and YT. Substrate-binding residues include tyrosine 129, arginine 133, and serine 137. Residues 146 to 147 and tryptophan 191 each bind FMN; that span reads QS. A substrate-binding site is contributed by 197–199; it reads RLH. Residue arginine 201 participates in FMN binding.

It belongs to the pyridoxamine 5'-phosphate oxidase family. In terms of assembly, homodimer. The cofactor is FMN.

The enzyme catalyses pyridoxamine 5'-phosphate + O2 + H2O = pyridoxal 5'-phosphate + H2O2 + NH4(+). The catalysed reaction is pyridoxine 5'-phosphate + O2 = pyridoxal 5'-phosphate + H2O2. It participates in cofactor metabolism; pyridoxal 5'-phosphate salvage; pyridoxal 5'-phosphate from pyridoxamine 5'-phosphate: step 1/1. The protein operates within cofactor metabolism; pyridoxal 5'-phosphate salvage; pyridoxal 5'-phosphate from pyridoxine 5'-phosphate: step 1/1. In terms of biological role, catalyzes the oxidation of either pyridoxine 5'-phosphate (PNP) or pyridoxamine 5'-phosphate (PMP) into pyridoxal 5'-phosphate (PLP). The sequence is that of Pyridoxine/pyridoxamine 5'-phosphate oxidase from Cronobacter sakazakii (strain ATCC BAA-894) (Enterobacter sakazakii).